Reading from the N-terminus, the 513-residue chain is Protein disulfide-isomerase (513 aa).

The first 25 residues, 1–25, serve as a signal peptide directing secretion; sequence MAISKVWISLLLALAVVLSAPAARA. Positions 26 to 149 constitute a Thioredoxin 1 domain; the sequence is EEAAAAEEAA…IVEYLKKQVG (124 aa). Catalysis depends on nucleophile residues cysteine 67 and cysteine 70. Cysteines 67 and 70 form a disulfide. A glycan (N-linked (GlcNAc...) asparagine) is linked at asparagine 282. The Thioredoxin 2 domain occupies 369–488; the sequence is FRKSEPIPEA…IVDYIRKNKE (120 aa). Residues cysteine 411 and cysteine 414 each act as nucleophile in the active site. Cysteines 411 and 414 form a disulfide. Over residues 491–507 the composition is skewed to low complexity; sequence GQAAAATEKAAEPAATE. A disordered region spans residues 491–513; it reads GQAAAATEKAAEPAATEPLKDEL. A Prevents secretion from ER motif is present at residues 510-513; that stretch reads KDEL.

The protein belongs to the protein disulfide isomerase family.

The protein localises to the endoplasmic reticulum lumen. The enzyme catalyses Catalyzes the rearrangement of -S-S- bonds in proteins.. Its function is as follows. Participates in the folding of proteins containing disulfide bonds, may be involved in glycosylation, prolyl hydroxylation and triglyceride transfer. This chain is Protein disulfide-isomerase (PDI), found in Hordeum vulgare (Barley).